We begin with the raw amino-acid sequence, 219 residues long: OVARIAN TUMOR DOMAIN-containing deubiquitinating enzyme 12 (219 aa).

Positions 79–203 (LCELKVSGDG…EVHYNSLYDI (125 aa)) constitute an OTU domain. The active site involves Asp87. Catalysis depends on Cys90, which acts as the Nucleophile. Residue His196 is part of the active site.

It belongs to the peptidase C85 family.

The enzyme catalyses Thiol-dependent hydrolysis of ester, thioester, amide, peptide and isopeptide bonds formed by the C-terminal Gly of ubiquitin (a 76-residue protein attached to proteins as an intracellular targeting signal).. In terms of biological role, hydrolase that can remove conjugated ubiquitin from proteins in vitro and may therefore play an important regulatory role at the level of protein turnover by preventing degradation. Inactive cysteine protease. The sequence is that of OVARIAN TUMOR DOMAIN-containing deubiquitinating enzyme 12 from Arabidopsis thaliana (Mouse-ear cress).